A 605-amino-acid chain; its full sequence is Elongation factor 4 (605 aa).

Positions 9–192 constitute a tr-type G domain; it reads SRIRNFCIIA…AIIARVPSPA (184 aa). Residues 21–26 and 139–142 each bind GTP; these read DHGKST and NKID.

This sequence belongs to the TRAFAC class translation factor GTPase superfamily. Classic translation factor GTPase family. LepA subfamily.

The protein resides in the cell inner membrane. The enzyme catalyses GTP + H2O = GDP + phosphate + H(+). Required for accurate and efficient protein synthesis under certain stress conditions. May act as a fidelity factor of the translation reaction, by catalyzing a one-codon backward translocation of tRNAs on improperly translocated ribosomes. Back-translocation proceeds from a post-translocation (POST) complex to a pre-translocation (PRE) complex, thus giving elongation factor G a second chance to translocate the tRNAs correctly. Binds to ribosomes in a GTP-dependent manner. This is Elongation factor 4 from Chlorobium phaeovibrioides (strain DSM 265 / 1930) (Prosthecochloris vibrioformis (strain DSM 265)).